The following is a 471-amino-acid chain: Iroquois-class homeodomain protein IRX-2 (471 aa).

A DNA-binding region (homeobox; TALE-type) is located at residues 112–175 (LNDPAYRKNA…ANARRRLKKE (64 aa)). Disordered regions lie at residues 176 to 373 (NKMT…SPYP) and 424 to 471 (APKA…QPYL). At Ser-186 the chain carries Phosphoserine. Residues 195–209 (DATRSKDESPDKAQE) show a composition bias toward basic and acidic residues. A compositionally biased stretch (acidic residues) spans 261-273 (DDLEDDEDDDEEG). Residues 355 to 367 (PAAAAPASTGAPP) are compositionally biased toward low complexity. Gly residues predominate over residues 462 to 471 (VVGGGVQPYL).

The protein belongs to the TALE/IRO homeobox family.

The protein resides in the nucleus. The polypeptide is Iroquois-class homeodomain protein IRX-2 (IRX2) (Homo sapiens (Human)).